The sequence spans 314 residues: DNA-directed RNA polymerase subunit alpha (314 aa).

The alpha N-terminal domain (alpha-NTD) stretch occupies residues M1–T227. The tract at residues Q244–D314 is alpha C-terminal domain (alpha-CTD).

Belongs to the RNA polymerase alpha chain family. In terms of assembly, homodimer. The RNAP catalytic core consists of 2 alpha, 1 beta, 1 beta' and 1 omega subunit. When a sigma factor is associated with the core the holoenzyme is formed, which can initiate transcription.

It carries out the reaction RNA(n) + a ribonucleoside 5'-triphosphate = RNA(n+1) + diphosphate. In terms of biological role, DNA-dependent RNA polymerase catalyzes the transcription of DNA into RNA using the four ribonucleoside triphosphates as substrates. The protein is DNA-directed RNA polymerase subunit alpha of Heliobacterium modesticaldum (strain ATCC 51547 / Ice1).